We begin with the raw amino-acid sequence, 447 residues long: Exodeoxyribonuclease 7 large subunit (447 aa).

It belongs to the XseA family. Heterooligomer composed of large and small subunits.

Its subcellular location is the cytoplasm. The enzyme catalyses Exonucleolytic cleavage in either 5'- to 3'- or 3'- to 5'-direction to yield nucleoside 5'-phosphates.. Its function is as follows. Bidirectionally degrades single-stranded DNA into large acid-insoluble oligonucleotides, which are then degraded further into small acid-soluble oligonucleotides. The protein is Exodeoxyribonuclease 7 large subunit of Lactobacillus helveticus (strain DPC 4571).